Consider the following 122-residue polypeptide: Ribonuclease pancreatic (122 aa).

Over residues 1–16 the composition is skewed to basic and acidic residues; sequence ETPAEKFQRQHMDTEH. The segment at 1–20 is disordered; that stretch reads ETPAEKFQRQHMDTEHSTAS. Substrate-binding residues include lysine 6 and arginine 9. The active-site Proton acceptor is histidine 11. Intrachain disulfides connect cysteine 25/cysteine 83, cysteine 39/cysteine 94, cysteine 57/cysteine 109, and cysteine 64/cysteine 71. Substrate contacts are provided by residues 40 to 44, lysine 65, and arginine 84; that span reads KPLNT. The Proton donor role is filled by histidine 117.

This sequence belongs to the pancreatic ribonuclease family. In terms of assembly, monomer. Interacts with and forms tight 1:1 complexes with RNH1. Dimerization of two such complexes may occur. Interaction with RNH1 inhibits this protein. Not glycosylated although the sequence N-V-T, a recognition site for carbohydrate attachment, is present. As to expression, pancreas.

The protein resides in the secreted. It carries out the reaction an [RNA] containing cytidine + H2O = an [RNA]-3'-cytidine-3'-phosphate + a 5'-hydroxy-ribonucleotide-3'-[RNA].. It catalyses the reaction an [RNA] containing uridine + H2O = an [RNA]-3'-uridine-3'-phosphate + a 5'-hydroxy-ribonucleotide-3'-[RNA].. Functionally, endonuclease that catalyzes the cleavage of RNA on the 3' side of pyrimidine nucleotides. Acts on single-stranded and double-stranded RNA. This chain is Ribonuclease pancreatic (RNASE1), found in Osphranter rufus (Red kangaroo).